The chain runs to 82 residues: Turripeptide IX-04 (82 aa).

An N-terminal signal peptide occupies residues 1-21; it reads MGFYMLLTVALLLTSLMNVEA. The propeptide occupies 22-39; it reads TPVDQAERSALEKSGLGN. 3 disulfides stabilise this stretch: Cys-48/Cys-70, Cys-55/Cys-74, and Cys-60/Cys-81.

As to expression, expressed by the venom duct.

The protein localises to the secreted. The protein is Turripeptide IX-04 of Gemmula speciosa (Splendid gem-turris).